The following is a 206-amino-acid chain: Recombination protein RecR (206 aa).

Residues Cys58–Cys73 form a C4-type zinc finger. Positions Gln81 to Ser176 constitute a Toprim domain.

It belongs to the RecR family.

Functionally, may play a role in DNA repair. It seems to be involved in an RecBC-independent recombinational process of DNA repair. It may act with RecF and RecO. The protein is Recombination protein RecR of Flavobacterium johnsoniae (strain ATCC 17061 / DSM 2064 / JCM 8514 / BCRC 14874 / CCUG 350202 / NBRC 14942 / NCIMB 11054 / UW101) (Cytophaga johnsonae).